A 492-amino-acid polypeptide reads, in one-letter code: Probable malate:quinone oxidoreductase 1 (492 aa).

The protein belongs to the MQO family. FAD serves as cofactor.

The catalysed reaction is (S)-malate + a quinone = a quinol + oxaloacetate. It participates in carbohydrate metabolism; tricarboxylic acid cycle; oxaloacetate from (S)-malate (quinone route): step 1/1. The polypeptide is Probable malate:quinone oxidoreductase 1 (Staphylococcus epidermidis (strain ATCC 35984 / DSM 28319 / BCRC 17069 / CCUG 31568 / BM 3577 / RP62A)).